The chain runs to 333 residues: Phenylalanine--tRNA ligase alpha subunit (333 aa).

Glutamate 254 is a binding site for Mg(2+).

The protein belongs to the class-II aminoacyl-tRNA synthetase family. Phe-tRNA synthetase alpha subunit type 1 subfamily. Tetramer of two alpha and two beta subunits. The cofactor is Mg(2+).

The protein resides in the cytoplasm. The catalysed reaction is tRNA(Phe) + L-phenylalanine + ATP = L-phenylalanyl-tRNA(Phe) + AMP + diphosphate + H(+). This Xylella fastidiosa (strain M23) protein is Phenylalanine--tRNA ligase alpha subunit.